The primary structure comprises 252 residues: Small ribosomal subunit protein uS2 (252 aa).

It belongs to the universal ribosomal protein uS2 family.

The polypeptide is Small ribosomal subunit protein uS2 (Ruminiclostridium cellulolyticum (strain ATCC 35319 / DSM 5812 / JCM 6584 / H10) (Clostridium cellulolyticum)).